Here is a 550-residue protein sequence, read N- to C-terminus: Eukaryotic translation initiation factor 3 subunit D-2 (550 aa).

Residues 97 to 126 are disordered; the sequence is RGRGFRPSVHNNPRNVRNQRGRKGNAMGNI. An RNA gate region spans residues 287 to 301; it reads KFDMLTVNETSQEPP. The disordered stretch occupies residues 530–550; it reads SDVSEEEESSEDKPFGLSMNN.

It belongs to the eIF-3 subunit D family. Component of the eukaryotic translation initiation factor 3 (eIF-3) complex. The eIF-3 complex interacts with pix.

The protein localises to the cytoplasm. In terms of biological role, mRNA cap-binding component of the eukaryotic translation initiation factor 3 (eIF-3) complex, which is involved in protein synthesis of a specialized repertoire of mRNAs and, together with other initiation factors, stimulates binding of mRNA and methionyl-tRNAi to the 40S ribosome. The eIF-3 complex specifically targets and initiates translation of a subset of mRNAs involved in cell proliferation. In the eIF-3 complex, eif3d specifically recognizes and binds the 7-methylguanosine cap of a subset of mRNAs. This Drosophila willistoni (Fruit fly) protein is Eukaryotic translation initiation factor 3 subunit D-2.